A 336-amino-acid polypeptide reads, in one-letter code: Tyrosine recombinase XerC (336 aa).

A Core-binding (CB) domain is found at 14–106 (VANCRWLGEF…SVKSFYRFLL (93 aa)). Positions 127 to 330 (KIPDFLSEEE…TFNRLRDAYT (204 aa)) constitute a Tyr recombinase domain. Catalysis depends on residues arginine 183, lysine 207, histidine 282, arginine 285, and histidine 308. Tyrosine 317 serves as the catalytic O-(3'-phospho-DNA)-tyrosine intermediate.

It belongs to the 'phage' integrase family. XerC subfamily. Forms a cyclic heterotetrameric complex composed of two molecules of XerC and two molecules of XerD.

The protein resides in the cytoplasm. Functionally, site-specific tyrosine recombinase, which acts by catalyzing the cutting and rejoining of the recombining DNA molecules. The XerC-XerD complex is essential to convert dimers of the bacterial chromosome into monomers to permit their segregation at cell division. It also contributes to the segregational stability of plasmids. In Chlorobaculum tepidum (strain ATCC 49652 / DSM 12025 / NBRC 103806 / TLS) (Chlorobium tepidum), this protein is Tyrosine recombinase XerC.